Consider the following 683-residue polypeptide: Rhophilin-2-B (683 aa).

An REM-1 domain is found at 25–99; it reads KSIAQTGRSK…LERLNISVEV (75 aa). One can recognise a BRO1 domain in the interval 110 to 501; it reads PLIPLGLKET…TDIFQRLGPL (392 aa). Positions 515–592 constitute a PDZ domain; that stretch reads KMCITKEDGD…DSIEIQVISI (78 aa).

This sequence belongs to the RHPN family. As to quaternary structure, interacts with RhoA.

The protein resides in the cytoplasm. The protein localises to the perinuclear region. Functionally, binds specifically to GTP-Rho. This is Rhophilin-2-B (rhpn2-b) from Xenopus laevis (African clawed frog).